A 234-amino-acid chain; its full sequence is Preprocaerulein type-4 (234 aa).

An N-terminal signal peptide occupies residues 1–26 (MFKGILLCVLFAVLSANPLSQPEGFA). Residues 27–73 (DEEERDVRGLASLLGKALKAALKIGANALGGSPQQREANDERRFADG) constitute a propeptide that is removed on maturation. Y77 bears the Sulfotyrosine mark. Position 83 is a phenylalanine amide (F83). Positions 87-137 (DDEDDVNERDVRGFGSFLGKALKAGLKIGTHFLGGAPQQREANDERRFADG) are excised as a propeptide. Y141 is subject to Sulfotyrosine. F147 bears the Phenylalanine amide mark. Residues 151 to 152 (DG) constitute a propeptide that is removed on maturation. Y156 carries the post-translational modification Sulfotyrosine. F162 carries the post-translational modification Phenylalanine amide. Residues 166 to 216 (DDEDDVHERDVRGFGSFLGKALKAALKIGANALGGSPQQREANDERRFADG) constitute a propeptide that is removed on maturation. Residues 198 to 234 (LGGSPQQREANDERRFADGQQDYTGWMDFGRRNGEDD) form a disordered region. Y220 carries the sulfotyrosine modification. F226 is modified (phenylalanine amide). Residues 230 to 234 (NGEDD) constitute a propeptide that is removed on maturation.

Belongs to the gastrin/cholecystokinin family. In terms of tissue distribution, expressed by the skin glands.

The protein localises to the secreted. The pharmacological activities of caerulein are quite similar to the physiological activities of gastrin and related peptides. This chain is Preprocaerulein type-4, found in Xenopus borealis (Kenyan clawed frog).